Consider the following 374-residue polypeptide: Heptahelical transmembrane protein 5 (374 aa).

Residues 1–79 (MGDEAEIKEH…LSIFTIHNET (79 aa)) are Cytoplasmic-facing. Residues 80–100 (LNVWTHLIGFFLFLALTIYTA) form a helical membrane-spanning segment. Residues 101–191 (TKVPSVVDLH…LIFRPITRWP (91 aa)) lie on the Extracellular side of the membrane. The helical transmembrane segment at 192 to 212 (FYAFLGGAIFCLLASSTCHLL) threads the bilayer. At 213 to 228 (SCHSERVSYIMLRLDY) the chain is on the cytoplasmic side. The helical transmembrane segment at 229–249 (AGIAALIATSFYPPVYYSFMC) threads the bilayer. Topologically, residues 250 to 256 (DPFFCNL) are extracellular. A helical membrane pass occupies residues 257–277 (YLGFITILGIATVLVSLLPVF). Residues 278–288 (QSLEFRVVRAS) are Cytoplasmic-facing. Residues 289–309 (LFFGMGFSGLAPILHKLIIFW) traverse the membrane as a helical segment. The Extracellular segment spans residues 310–313 (DQPE). Residues 314–334 (ALHMTGYEILMGLLYGLGAVV) form a helical membrane-spanning segment. Over 335–347 (YATRIPERWMPGK) the chain is Cytoplasmic. Residues 348–368 (FDIAGHSHQLFHVLVVAGALT) traverse the membrane as a helical segment. At 369–374 (HYRAGL) the chain is on the extracellular side.

It belongs to the ADIPOR family. As to expression, expressed in roots, leaves, stems and flowers.

It localises to the membrane. Functionally, may play a role in abiotic stress response. This chain is Heptahelical transmembrane protein 5 (HHP5), found in Arabidopsis thaliana (Mouse-ear cress).